Reading from the N-terminus, the 199-residue chain is Recombination protein RecR (199 aa).

The C4-type zinc-finger motif lies at 57–72 (CSICFNLTDTDPCAIC). One can recognise a Toprim domain in the interval 80–175 (RLLMVVEEAK…KVTRIAHGLP (96 aa)).

Belongs to the RecR family.

Functionally, may play a role in DNA repair. It seems to be involved in an RecBC-independent recombinational process of DNA repair. It may act with RecF and RecO. The polypeptide is Recombination protein RecR (Carboxydothermus hydrogenoformans (strain ATCC BAA-161 / DSM 6008 / Z-2901)).